Reading from the N-terminus, the 344-residue chain is Cyclin-dependent kinase 20 (344 aa).

Residues 4–288 (YSILGRIGEG…ARQALLHPYF (285 aa)) form the Protein kinase domain. Residues 10 to 18 (IGEGAHGIV) and K33 each bind ATP. D127 functions as the Proton acceptor in the catalytic mechanism.

This sequence belongs to the protein kinase superfamily. CMGC Ser/Thr protein kinase family. CDC2/CDKX subfamily. As to quaternary structure, monomer. Interacts with tbc1d32.

The protein resides in the nucleus. Its subcellular location is the cytoplasm. It is found in the cell projection. The protein localises to the cilium. The enzyme catalyses L-seryl-[protein] + ATP = O-phospho-L-seryl-[protein] + ADP + H(+). It catalyses the reaction L-threonyl-[protein] + ATP = O-phospho-L-threonyl-[protein] + ADP + H(+). Functionally, involved in cell growth. Activates cdk2, a kinase involved in the control of the cell cycle, by phosphorylating residue 'Thr-160'. Required for high-level Shh responses in the developing neural tube. Together with tbc1d32, controls the structure of the primary cilium by coordinating assembly of the ciliary membrane and axoneme, allowing gli2 to be properly activated in response to SHH signaling. The chain is Cyclin-dependent kinase 20 (cdk20) from Danio rerio (Zebrafish).